Reading from the N-terminus, the 319-residue chain is Polyprenyl transferase macG (319 aa).

A run of 9 helical transmembrane segments spans residues Ala28–Met45, Val48–Ala68, Ala106–Gly126, Pro127–Lys147, Phe152–Ile172, Ala182–Thr202, Val224–Leu244, Ser249–Leu269, and Leu289–Ile309.

Belongs to the UbiA prenyltransferase family. Requires Mg(2+) as cofactor.

It is found in the membrane. The protein operates within secondary metabolite biosynthesis; terpenoid biosynthesis. Its function is as follows. Polyprenyl transferase; part of the gene cluster that mediates the biosynthesis of macrophorins, isoprenoid epoxycyclohexenones containing cyclized drimane moieties. The first step of the pathway is the synthesis of 6-methylsalicylic acid (6-MSA) by the polyketide synthase macA. 6-MSA is then converted to m-cresol by the decarboxylase macB. The cytochrome P450 monooxygenase macC then catalyzes the oxidation of m-cresol to toluquinol. Epoxidation of toluquinol is then performed by the short chain dehydrogenase macD, with the help of macE, and a further prenylation by macG leads to 7-deacetoxyyanuthone A. The next step is the hydroxylation of C-22 of 7-deacetoxyyanuthone A by the cytochrome P450 monooxygenase macH to yield 22-deacetylyanuthone A. O-Mevalon transferase macI then attaches mevalon to the hydroxyl group of 22-deacetylyanuthone A to produce yanuthone E. The terpene cyclase macJ catalyzes the cyclization of 22-deacetylyanuthone A to macrophorin A. MacJ is also able to catalyze cyclization of yanuthone E and 7-deacetoxyyanuthone A to their corresponding macrophorins. The macJ products can be further modified by macH and macJ, as well as by the FAD-dependent monooxygenase macF, to produce additional macrophorins, including 4'-oxomacrophorin A, 4'-oxomacrophorin D and 4'-oxomacrophorin E. The chain is Polyprenyl transferase macG from Penicillium terrestre.